Reading from the N-terminus, the 340-residue chain is tRNA N6-adenosine threonylcarbamoyltransferase (340 aa).

Fe cation is bound by residues His111 and His115. Residues Leu134 to Gly138, Asp167, Gly180, and Asn276 each bind substrate. Asp304 lines the Fe cation pocket.

Belongs to the KAE1 / TsaD family. It depends on Fe(2+) as a cofactor.

The protein resides in the cytoplasm. The enzyme catalyses L-threonylcarbamoyladenylate + adenosine(37) in tRNA = N(6)-L-threonylcarbamoyladenosine(37) in tRNA + AMP + H(+). In terms of biological role, required for the formation of a threonylcarbamoyl group on adenosine at position 37 (t(6)A37) in tRNAs that read codons beginning with adenine. Is involved in the transfer of the threonylcarbamoyl moiety of threonylcarbamoyl-AMP (TC-AMP) to the N6 group of A37, together with TsaE and TsaB. TsaD likely plays a direct catalytic role in this reaction. This chain is tRNA N6-adenosine threonylcarbamoyltransferase, found in Helicobacter pylori (strain Shi470).